Reading from the N-terminus, the 119-residue chain is MLSNIIPLSIGAALGATARWLLNLAVPASLSPATGNLFANWTGAFLIGIFAETVNHPQWKLLLITGFLGSLTTLSGFSLETVTLLQSNRPASALANIFLHTAGSLLLTWLGLKIGTAVK.

The next 4 membrane-spanning stretches (helical) occupy residues isoleucine 5–alanine 25, leucine 30–phenylalanine 50, tryptophan 59–leucine 79, and serine 92–leucine 112. Positions 69 and 72 each coordinate Na(+).

This sequence belongs to the fluoride channel Fluc/FEX (TC 1.A.43) family.

The protein resides in the cell inner membrane. The enzyme catalyses fluoride(in) = fluoride(out). Na(+) is not transported, but it plays an essential structural role and its presence is essential for fluoride channel function. Its function is as follows. Fluoride-specific ion channel. Important for reducing fluoride concentration in the cell, thus reducing its toxicity. This chain is Fluoride-specific ion channel FluC, found in Neisseria meningitidis serogroup A / serotype 4A (strain DSM 15465 / Z2491).